The chain runs to 338 residues: Ribosomal RNA small subunit methyltransferase C (338 aa).

Belongs to the methyltransferase superfamily. RsmC family. As to quaternary structure, monomer.

It localises to the cytoplasm. It carries out the reaction guanosine(1207) in 16S rRNA + S-adenosyl-L-methionine = N(2)-methylguanosine(1207) in 16S rRNA + S-adenosyl-L-homocysteine + H(+). Its function is as follows. Specifically methylates the guanine in position 1207 of 16S rRNA in the 30S particle. This is Ribosomal RNA small subunit methyltransferase C from Acinetobacter baylyi (strain ATCC 33305 / BD413 / ADP1).